The following is a 361-amino-acid chain: Cyclin-D3-3 (361 aa).

It belongs to the cyclin family. Cyclin D subfamily.

In terms of biological role, promotes divisions in the guard cells (GCs) after the guard mother cells (GMC) symmetric division. This Arabidopsis thaliana (Mouse-ear cress) protein is Cyclin-D3-3 (CYCD3-3).